A 123-amino-acid polypeptide reads, in one-letter code: Small ribosomal subunit protein uS13 (123 aa).

The protein belongs to the universal ribosomal protein uS13 family. In terms of assembly, part of the 30S ribosomal subunit. Forms a loose heterodimer with protein S19. Forms two bridges to the 50S subunit in the 70S ribosome.

Its function is as follows. Located at the top of the head of the 30S subunit, it contacts several helices of the 16S rRNA. In the 70S ribosome it contacts the 23S rRNA (bridge B1a) and protein L5 of the 50S subunit (bridge B1b), connecting the 2 subunits; these bridges are implicated in subunit movement. Contacts the tRNAs in the A and P-sites. This chain is Small ribosomal subunit protein uS13, found in Anaplasma marginale (strain St. Maries).